The following is a 196-amino-acid chain: Glycerol-3-phosphate acyltransferase (196 aa).

The next 4 membrane-spanning stretches (helical) occupy residues 4 to 24 (IYIA…GLIL), 70 to 90 (VLIA…LGAF), 111 to 131 (IGVL…LWLA), and 152 to 172 (IFLW…LTLL).

Belongs to the PlsY family. Probably interacts with PlsX.

It localises to the cell inner membrane. The enzyme catalyses an acyl phosphate + sn-glycerol 3-phosphate = a 1-acyl-sn-glycero-3-phosphate + phosphate. It participates in lipid metabolism; phospholipid metabolism. Functionally, catalyzes the transfer of an acyl group from acyl-phosphate (acyl-PO(4)) to glycerol-3-phosphate (G3P) to form lysophosphatidic acid (LPA). This enzyme utilizes acyl-phosphate as fatty acyl donor, but not acyl-CoA or acyl-ACP. The polypeptide is Glycerol-3-phosphate acyltransferase (Rhodopseudomonas palustris (strain BisB5)).